A 96-amino-acid polypeptide reads, in one-letter code: Acylphosphatase (96 aa).

Residues 4-91 (RVHVYVKGKV…GEFDDFRILY (88 aa)) enclose the Acylphosphatase-like domain. Active-site residues include R19 and N37.

Belongs to the acylphosphatase family.

It carries out the reaction an acyl phosphate + H2O = a carboxylate + phosphate + H(+). This is Acylphosphatase (acyP) from Syntrophus aciditrophicus (strain SB).